A 249-amino-acid chain; its full sequence is General transcription factor IIF subunit 2 (249 aa).

Alanine 2 carries the post-translational modification N-acetylalanine. Lysine 22, lysine 33, and lysine 137 each carry N6-acetyllysine. Serine 142 is subject to Phosphoserine. DNA is bound by residues glycine 227 and histidine 229. Serine 248 is modified (phosphoserine).

The protein belongs to the TFIIF beta subunit family. Heterodimer of an alpha and a beta subunit. Interacts with HTATSF1 and URI1. Interacts with GPBP1. Interacts with GTF2B (via N-terminus); this interaction is inhibited in presence of GTF2F1. Part of TBP-based Pol II pre-initiation complex (PIC), in which Pol II core assembles with general transcription factors and other specific initiation factors including GTF2E1, GTF2E2, GTF2F1, GTF2F2, TCEA1, ERCC2, ERCC3, GTF2H2, GTF2H3, GTF2H4, GTF2H5, GTF2A1, GTF2A2, GTF2B and TBP; this large multi-subunit PIC complex mediates DNA unwinding and targets Pol II core to the transcription start site where the first phosphodiester bond forms.

Its subcellular location is the nucleus. TFIIF is a general transcription initiation factor that binds to RNA polymerase II and helps to recruit it to the initiation complex in collaboration with TFIIB. The protein is General transcription factor IIF subunit 2 (Gtf2f2) of Mus musculus (Mouse).